Here is a 456-residue protein sequence, read N- to C-terminus: Nitrogenase molybdenum-iron protein beta chain (456 aa).

Residues Cys23, Cys48, Cys106, and Ser141 each contribute to the [8Fe-7S] cluster site.

The protein belongs to the NifD/NifK/NifE/NifN family. Tetramer of two alpha and two beta chains. Forms complex with the iron protein (nitrogenase component 2). The cofactor is [8Fe-7S] cluster.

The catalysed reaction is N2 + 8 reduced [2Fe-2S]-[ferredoxin] + 16 ATP + 16 H2O = H2 + 8 oxidized [2Fe-2S]-[ferredoxin] + 2 NH4(+) + 16 ADP + 16 phosphate + 6 H(+). This molybdenum-iron protein is part of the nitrogenase complex that catalyzes the key enzymatic reactions in nitrogen fixation. The chain is Nitrogenase molybdenum-iron protein beta chain (nifK2) from Methanosarcina barkeri.